A 468-amino-acid polypeptide reads, in one-letter code: ATP synthase subunit beta (468 aa).

Residue G148–T155 participates in ATP binding.

The protein belongs to the ATPase alpha/beta chains family. F-type ATPases have 2 components, CF(1) - the catalytic core - and CF(0) - the membrane proton channel. CF(1) has five subunits: alpha(3), beta(3), gamma(1), delta(1), epsilon(1). CF(0) has three main subunits: a(1), b(2) and c(9-12). The alpha and beta chains form an alternating ring which encloses part of the gamma chain. CF(1) is attached to CF(0) by a central stalk formed by the gamma and epsilon chains, while a peripheral stalk is formed by the delta and b chains.

Its subcellular location is the cell inner membrane. It carries out the reaction ATP + H2O + 4 H(+)(in) = ADP + phosphate + 5 H(+)(out). Produces ATP from ADP in the presence of a proton gradient across the membrane. The catalytic sites are hosted primarily by the beta subunits. The chain is ATP synthase subunit beta from Xanthomonas campestris pv. campestris (strain 8004).